The primary structure comprises 174 residues: Ribosome maturation factor RimP (174 aa).

Belongs to the RimP family.

It is found in the cytoplasm. Required for maturation of 30S ribosomal subunits. The sequence is that of Ribosome maturation factor RimP from Acinetobacter baumannii (strain AB307-0294).